A 448-amino-acid chain; its full sequence is Homogentisate 1,2-dioxygenase (448 aa).

H303 (proton acceptor) is an active-site residue. Fe cation contacts are provided by H346 and E352. 2 residues coordinate homogentisate: Y361 and H382. H382 provides a ligand contact to Fe cation.

The protein belongs to the homogentisate dioxygenase family. In terms of assembly, hexamer; dimer of trimers. The cofactor is Fe cation.

The catalysed reaction is homogentisate + O2 = 4-maleylacetoacetate + H(+). It participates in amino-acid degradation; L-phenylalanine degradation; acetoacetate and fumarate from L-phenylalanine: step 4/6. Functionally, involved in the catabolism of homogentisate (2,5-dihydroxyphenylacetate or 2,5-OH-PhAc), a central intermediate in the degradation of phenylalanine and tyrosine. Catalyzes the oxidative ring cleavage of the aromatic ring of homogentisate to yield maleylacetoacetate. The polypeptide is Homogentisate 1,2-dioxygenase (Rhodopseudomonas palustris (strain BisA53)).